The primary structure comprises 692 residues: Potassium-transporting ATPase ATP-binding subunit (692 aa).

4 helical membrane passes run 35–55, 64–84, 213–233, and 254–274; these read VMFIVFLGALFTTWIFFKDLY, LQISLWLWFTVLFANFAEAIA, IALTMLLSGLSFIFLIAVMSL, and ILISLLVCLIPTTIAGLLSAI. D307 serves as the catalytic 4-aspartylphosphate intermediate. ATP is bound by residues D344, E348, 377-384, and K400; that span reads FSASTKMS. Mg(2+) is bound by residues D523 and D527. Helical transmembrane passes span 592–612, 626–646, and 672–692; these read YFAILPALFGSFYAVSEVGPL, AVLSAVIFNALVIPALIPLAL, and MVIPFLGIKCIDLMLGFLGII.

The protein belongs to the cation transport ATPase (P-type) (TC 3.A.3) family. Type IA subfamily. The system is composed of three essential subunits: KdpA, KdpB and KdpC.

Its subcellular location is the cell inner membrane. The enzyme catalyses K(+)(out) + ATP + H2O = K(+)(in) + ADP + phosphate + H(+). Its function is as follows. Part of the high-affinity ATP-driven potassium transport (or Kdp) system, which catalyzes the hydrolysis of ATP coupled with the electrogenic transport of potassium into the cytoplasm. This subunit is responsible for energy coupling to the transport system and for the release of the potassium ions to the cytoplasm. The chain is Potassium-transporting ATPase ATP-binding subunit from Leptospira interrogans serogroup Icterohaemorrhagiae serovar Lai (strain 56601).